The following is a 257-amino-acid chain: Snake venom serine protease serpentokallikrein-2 (257 aa).

Positions 1 to 18 (MVLIRVLANLLILQLSYA) are cleaved as a signal peptide. A propeptide spanning residues 19–24 (QKSSEL) is cleaved from the precursor. A Peptidase S1 domain is found at 25–248 (VIGGDECNIN…HLDWIKGIIA (224 aa)). Intrachain disulfides connect Cys31–Cys162, Cys49–Cys65, Cys97–Cys255, Cys141–Cys209, Cys173–Cys188, and Cys199–Cys224. His64 (charge relay system) is an active-site residue. The N-linked (GlcNAc...) asparagine glycan is linked to Asn102. Asp109 functions as the Charge relay system in the catalytic mechanism. Residue Ser203 is the Charge relay system of the active site.

This sequence belongs to the peptidase S1 family. Snake venom subfamily. Monomer. As to expression, expressed by the venom gland.

It localises to the secreted. Snake venom serine protease that may act in the hemostasis system of the prey. The sequence is that of Snake venom serine protease serpentokallikrein-2 from Protobothrops mucrosquamatus (Taiwan habu).